Reading from the N-terminus, the 427-residue chain is Stabilizer of axonemal microtubules 4 (427 aa).

Disordered stretches follow at residues 82-105 (TSKS…PLPW), 273-298 (RTLN…QPPQ), and 314-335 (GNKE…SYEQ). Polar residues-rich tracts occupy residues 287–298 (ASMSHRSYQPPQ) and 321–332 (FTLNNPSYVRSS).

Microtubule inner protein component of sperm flagellar doublet microtubules. Interacts with PPP1CA.

The protein localises to the cell projection. It localises to the cilium. The protein resides in the cytoplasm. Its subcellular location is the cytoskeleton. It is found in the flagellum axoneme. The polypeptide is Stabilizer of axonemal microtubules 4 (Mus musculus (Mouse)).